The sequence spans 459 residues: Endoglucanase EG-1 (459 aa).

The first 22 residues, 1-22, serve as a signal peptide directing secretion; it reads MAPSVTLPLTTAILAIARLVAA. Position 23 is a pyrrolidone carboxylic acid (Gln23). Residues 23–397 are catalytic; the sequence is QQPGTSTPEV…DIGSTTNSTA (375 aa). Disulfide bonds link Cys41/Cys47, Cys71/Cys92, Cys82/Cys88, Cys161/Cys360, Cys193/Cys216, Cys197/Cys215, Cys236/Cys241, and Cys246/Cys315. Asn78 carries an N-linked (GlcNAc) asparagine glycan. A glycan (N-linked (GlcNAc...) (high mannose) asparagine) is linked at Asn204. Residue Glu218 is the Nucleophile of the active site. Catalysis depends on Glu223, which acts as the Proton donor/acceptor. The interval 390 to 425 is disordered; sequence GSTTNSTAPPPPPASSTTFSTTRRSSTTSSSPSCTQ. Asn394 carries an N-linked (GlcNAc...) asparagine glycan. The tract at residues 398–423 is linker; sequence PPPPPASSTTFSTTRRSSTTSSSPSC. Residues 404 to 425 show a composition bias toward low complexity; the sequence is SSTTFSTTRRSSTTSSSPSCTQ. Intrachain disulfides connect Cys423–Cys439, Cys431–Cys448, and Cys442–Cys458. Residues 423–459 enclose the CBM1 domain; sequence CTQTHWGQCGGIGYSGCKTCTSGTTCQYSNDYYSQCL.

The protein belongs to the glycosyl hydrolase 7 (cellulase C) family. In terms of processing, asn-204 contains mainly a high-mannose-type glycan (Hex(7-9)GlcNAc(2)), with a small fraction (8%) bearing a single GlcNAc at this site.

It is found in the secreted. It catalyses the reaction Endohydrolysis of (1-&gt;4)-beta-D-glucosidic linkages in cellulose, lichenin and cereal beta-D-glucans.. Its function is as follows. Endoglucanase (EG) that cleaves the internal beta-1,4-glucosidic bonds in cellulose. The degradation of cellulose involves an interplay between different cellulolytic enzymes. Hydrolysis starts with EGs, which cut internal glycosidic linkages to reduce the polymerization degree of the substrate and creates new chain ends for exocellobiohydrolases (CBHs). The CBH release the disaccharide cellobiose from the non-reducing end of the cellulose polymer chain. Finally, beta-1,4-glucosidases hydrolyze the cellobiose and other short cello-oligosaccharides into glucose units. The chain is Endoglucanase EG-1 (egl1) from Hypocrea jecorina (Trichoderma reesei).